The following is a 265-amino-acid chain: Methyl-coenzyme M reductase II subunit gamma (265 aa).

Residue Arg123 coordinates coenzyme M.

The protein belongs to the methyl-coenzyme M reductase gamma subunit family. As to quaternary structure, MCR is a hexamer of two alpha, two beta, and two gamma chains, forming a dimer of heterotrimers. Coenzyme F430 serves as cofactor.

It carries out the reaction coenzyme B + methyl-coenzyme M = methane + coenzyme M-coenzyme B heterodisulfide. It participates in one-carbon metabolism; methyl-coenzyme M reduction; methane from methyl-coenzyme M: step 1/1. In terms of biological role, component of the methyl-coenzyme M reductase (MCR) I that catalyzes the reductive cleavage of methyl-coenzyme M (CoM-S-CH3 or 2-(methylthio)ethanesulfonate) using coenzyme B (CoB or 7-mercaptoheptanoylthreonine phosphate) as reductant which results in the production of methane and the mixed heterodisulfide of CoB and CoM (CoM-S-S-CoB). This is the final step in methanogenesis. This Methanothermobacter thermautotrophicus (strain ATCC 29096 / DSM 1053 / JCM 10044 / NBRC 100330 / Delta H) (Methanobacterium thermoautotrophicum) protein is Methyl-coenzyme M reductase II subunit gamma (mrtG).